The following is a 327-amino-acid chain: 2-methoxy-6-polyprenyl-1,4-benzoquinol methylase, mitochondrial (327 aa).

The N-terminal 42 residues, 1–42 (MAAPGSCALWSYCGRGWSRAMRGCQLLGLRSSWPGDLLSARL), are a transit peptide targeting the mitochondrion. Residues T117, D171, and 199 to 200 (DA) contribute to the S-adenosyl-L-methionine site.

This sequence belongs to the class I-like SAM-binding methyltransferase superfamily. MenG/UbiE family. As to quaternary structure, component of a multi-subunit COQ enzyme complex, composed of at least COQ3, COQ4, COQ5, COQ6, COQ7 and COQ9. Interacts with PYURF; the interaction is direct, stabilizes COQ5 protein and associates PYURF with COQ enzyme complex. As to expression, widely expressed, with highest levels in liver, lung, placenta and skeletal muscle.

The protein localises to the mitochondrion inner membrane. It catalyses the reaction 2-methoxy-6-(all-trans-decaprenyl)benzene-1,4-diol + S-adenosyl-L-methionine = 5-methoxy-2-methyl-3-(all-trans-decaprenyl)benzene-1,4-diol + S-adenosyl-L-homocysteine + H(+). It functions in the pathway cofactor biosynthesis; ubiquinone biosynthesis. In terms of biological role, methyltransferase required for the conversion of 2-decaprenyl-6-methoxy-1,4-benzoquinol (DDMQH2) to 2-decaprenyl-3-methyl-6-methoxy-1,4-benzoquinol (DMQH2). The protein is 2-methoxy-6-polyprenyl-1,4-benzoquinol methylase, mitochondrial of Homo sapiens (Human).